We begin with the raw amino-acid sequence, 77 residues long: Large ribosomal subunit protein bL28 (77 aa).

It belongs to the bacterial ribosomal protein bL28 family.

This chain is Large ribosomal subunit protein bL28, found in Ralstonia nicotianae (strain ATCC BAA-1114 / GMI1000) (Ralstonia solanacearum).